The sequence spans 335 residues: Phosphate acyltransferase (335 aa).

Belongs to the PlsX family. As to quaternary structure, homodimer. Probably interacts with PlsY.

It is found in the cytoplasm. It catalyses the reaction a fatty acyl-[ACP] + phosphate = an acyl phosphate + holo-[ACP]. The protein operates within lipid metabolism; phospholipid metabolism. Functionally, catalyzes the reversible formation of acyl-phosphate (acyl-PO(4)) from acyl-[acyl-carrier-protein] (acyl-ACP). This enzyme utilizes acyl-ACP as fatty acyl donor, but not acyl-CoA. The chain is Phosphate acyltransferase from Clostridium botulinum (strain Langeland / NCTC 10281 / Type F).